The chain runs to 98 residues: Small ribosomal subunit protein bS20 (98 aa).

Over residues 1–12 (MAPRKPSKKVGP) the composition is skewed to basic residues. Positions 1-34 (MAPRKPSKKVGPQKRPSAEKRVITSKKKQLRNQS) are disordered.

Belongs to the bacterial ribosomal protein bS20 family.

In terms of biological role, binds directly to 16S ribosomal RNA. This chain is Small ribosomal subunit protein bS20, found in Chlamydia muridarum (strain MoPn / Nigg).